We begin with the raw amino-acid sequence, 88 residues long: MALKERIGTVVSDKMDKTVVVAVINRYPHPTYKKIVSKTTRYKAHDPENSCAMGDRVKIKETRPLSAHKRWAIEEILNKTIKNKEDKK.

This sequence belongs to the universal ribosomal protein uS17 family. In terms of assembly, part of the 30S ribosomal subunit.

One of the primary rRNA binding proteins, it binds specifically to the 5'-end of 16S ribosomal RNA. This chain is Small ribosomal subunit protein uS17, found in Prochlorococcus marinus (strain MIT 9515).